We begin with the raw amino-acid sequence, 1355 residues long: NACHT, LRR and PYD domains-containing protein 1 homolog (1355 aa).

In terms of domain architecture, NACHT spans 257–458 (KTVILCGDSG…SVPLLCWMVC (202 aa)). 263–270 (GDSGRGKS) provides a ligand contact to ATP. The segment at 977-1109 (DSDQWVQVEP…FHAKILQPMF (133 aa)) is ZU5. The region spanning 977 to 1252 (DSDQWVQVEP…NKTESDLFQS (276 aa)) is the FIIND domain. Residues 1110–1252 (SPKTVLVKLG…NKTESDLFQS (143 aa)) are UPA. In terms of domain architecture, CARD spans 1278–1354 (LIKSVENVDT…NLLNHLPSSD (77 aa)).

The protein belongs to the NLRP family. In terms of assembly, interacts with the C-terminal part of nlrp1 (NACHT, LRR and PYD domains-containing protein 1, C-terminus) in absence of pathogens and other damage-associated signals. Interacts with the N-terminal part of nlrp1 (NACHT, LRR and PYD domains-containing protein 1, N-terminus) in absence of pathogens and other damage-associated signals. Homomultimer; forms the nlrp1 inflammasome polymeric complex, a filament composed of homopolymers of this form in response to pathogens and other damage-associated signals. The nlrp1 inflammasome polymeric complex associates with pycard/asc. Interacts (via CARD domain) with pycard/asc (via CARD domain); leading to pro-inflammatory caspases (caspa and/or caspb) recruitment. Pro-caspase-a and pro-caspase-b filament formation increases local enzyme concentration, resulting in trans-autocleavage and activation. Active caspa and caspb then processes il1b and il18 precursors, leading to the release of mature cytokines in the extracellular milieu and inflammatory response. In terms of processing, autocatalytically cleaved. Autocatalytic cleavage in FIIND region occurs constitutively, prior to activation signals, and is required for inflammasome activity (IL1B release), possibly by facilitating pro-inflammatory caspases (caspa and/or caspb) binding. Both N- and C-terminal parts remain associated non-covalently. Ubiquitinated in response to pathogen-associated signals, leading to its degradation by the proteasome and subsequent release of the cleaved C-terminal part of the protein (NACHT, LRR and PYD domains-containing protein 1, C-terminus), which polymerizes and forms the nlrp1 inflammasome. In terms of tissue distribution, expressed in adult spleen, head kidney, gill and skin and also in the embryo.

The protein resides in the cytoplasm. It localises to the inflammasome. Nlrp1 inflammasome is activated by pathogens and other damage-associated signals: activation promotes ubiquitination and degradation of the N-terminal part, releasing the cleaved C-terminal part of the protein (NACHT, LRR and PYD domains-containing protein 1, C-terminus), which polymerizes and forms the nlrp1 inflammasome. Acts as the sensor component of the nlrp1 inflammasome, which mediates inflammasome activation in response to various pathogen-associated signals, leading to subsequent pyroptosis. Inflammasomes are supramolecular complexes that assemble in the cytosol in response to pathogens and other damage-associated signals and play critical roles in innate immunity and inflammation. Acts as a recognition receptor (PRR): recognizes specific pathogens and other damage-associated signals, and mediates the formation of the inflammasome polymeric complex. In response to pathogen-associated signals, the N-terminal part of nlrp1 is degraded by the proteasome, releasing the cleaved C-terminal part of the protein (NACHT, LRR and PYD domains-containing protein 1, C-terminus), which polymerizes to initiate the formation of the inflammasome complex: the inflammasome recruits and activate pro-inflammatory caspases (caspa and/or caspb), leading to pyroptosis. Functionally, constitutes the precursor of the nlrp1 inflammasome, which mediates autoproteolytic processing within the FIIND domain to generate the N-terminal and C-terminal parts, which are associated non-covalently in absence of pathogens and other damage-associated signals. Its function is as follows. Regulatory part that prevents formation of the nlrp1 inflammasome: in absence of pathogens and other damage-associated signals, interacts with the C-terminal part of nlrp1 (NACHT, LRR and PYD domains-containing protein 1, C-terminus), preventing activation of the nlrp1 inflammasome. In response to pathogen-associated signals, this part is ubiquitinated and degraded by the proteasome, releasing the cleaved C-terminal part of the protein, which polymerizes and forms the nlrp1 inflammasome. In terms of biological role, constitutes the active part of the nlrp1 inflammasome. In absence of pathogens and other damage-associated signals, interacts with the N-terminal part of nlrp1 (NACHT, LRR and PYD domains-containing protein 1, N-terminus), preventing activation of the nlrp1 inflammasome. In response to pathogen-associated signals, the N-terminal part of nlrp1 is degraded by the proteasome, releasing this form, which polymerizes to form the nlrp1 inflammasome complex: the nlrp1 inflammasome complex then directly recruits and activates pro-inflammatory caspases (caspa and/or caspb) activation, leading to subsequent pyroptosis. This chain is NACHT, LRR and PYD domains-containing protein 1 homolog, found in Danio rerio (Zebrafish).